Consider the following 480-residue polypeptide: Cytochrome b-c1 complex subunit 1, mitochondrial (480 aa).

Residues 1–34 (MAASAVCRAAGAGTRVLLRTRRSPALLRSSDLRG) constitute a mitochondrion transit peptide. N6-acetyllysine occurs at positions 111 and 138. Lys163 carries the N6-acetyllysine; alternate modification. Lys163 carries the post-translational modification N6-succinyllysine; alternate. Ser212 is modified (phosphoserine). Position 248 is an N6-acetyllysine (Lys248).

This sequence belongs to the peptidase M16 family. UQCRC1/QCR1 subfamily. In terms of assembly, component of the ubiquinol-cytochrome c oxidoreductase (cytochrome b-c1 complex, complex III, CIII), a multisubunit enzyme composed of 11 subunits. The complex is composed of 3 respiratory subunits cytochrome b, cytochrome c1 and Rieske protein UQCRFS1, 2 core protein subunits UQCRC1/QCR1 and UQCRC2/QCR2, and 6 low-molecular weight protein subunits UQCRH/QCR6, UQCRB/QCR7, UQCRQ/QCR8, UQCR10/QCR9, UQCR11/QCR10 and subunit 9, the cleavage product of Rieske protein UQCRFS1. The complex exists as an obligatory dimer and forms supercomplexes (SCs) in the inner mitochondrial membrane with NADH-ubiquinone oxidoreductase (complex I, CI) and cytochrome c oxidase (complex IV, CIV), resulting in different assemblies (supercomplex SCI(1)III(2)IV(1) and megacomplex MCI(2)III(2)IV(2)). Interacts with UQCC6. Interacts with STMP1.

The protein resides in the mitochondrion inner membrane. Component of the ubiquinol-cytochrome c oxidoreductase, a multisubunit transmembrane complex that is part of the mitochondrial electron transport chain which drives oxidative phosphorylation. The respiratory chain contains 3 multisubunit complexes succinate dehydrogenase (complex II, CII), ubiquinol-cytochrome c oxidoreductase (cytochrome b-c1 complex, complex III, CIII) and cytochrome c oxidase (complex IV, CIV), that cooperate to transfer electrons derived from NADH and succinate to molecular oxygen, creating an electrochemical gradient over the inner membrane that drives transmembrane transport and the ATP synthase. The cytochrome b-c1 complex catalyzes electron transfer from ubiquinol to cytochrome c, linking this redox reaction to translocation of protons across the mitochondrial inner membrane, with protons being carried across the membrane as hydrogens on the quinol. In the process called Q cycle, 2 protons are consumed from the matrix, 4 protons are released into the intermembrane space and 2 electrons are passed to cytochrome c. The 2 core subunits UQCRC1/QCR1 and UQCRC2/QCR2 are homologous to the 2 mitochondrial-processing peptidase (MPP) subunits beta-MPP and alpha-MPP respectively, and they seem to have preserved their MPP processing properties. May be involved in the in situ processing of UQCRFS1 into the mature Rieske protein and its mitochondrial targeting sequence (MTS)/subunit 9 when incorporated into complex III. Seems to play an important role in the maintenance of proper mitochondrial function in nigral dopaminergic neurons. The chain is Cytochrome b-c1 complex subunit 1, mitochondrial (UQCRC1) from Bos taurus (Bovine).